The primary structure comprises 190 residues: Peptidyl-tRNA hydrolase (190 aa).

Residue Phe14 coordinates tRNA. The Proton acceptor role is filled by His19. The tRNA site is built by Met64, Asn66, and Asn112.

The protein belongs to the PTH family. Monomer.

The protein resides in the cytoplasm. The enzyme catalyses an N-acyl-L-alpha-aminoacyl-tRNA + H2O = an N-acyl-L-amino acid + a tRNA + H(+). In terms of biological role, hydrolyzes ribosome-free peptidyl-tRNAs (with 1 or more amino acids incorporated), which drop off the ribosome during protein synthesis, or as a result of ribosome stalling. Functionally, catalyzes the release of premature peptidyl moieties from peptidyl-tRNA molecules trapped in stalled 50S ribosomal subunits, and thus maintains levels of free tRNAs and 50S ribosomes. The protein is Peptidyl-tRNA hydrolase of Staphylococcus haemolyticus (strain JCSC1435).